Here is a 598-residue protein sequence, read N- to C-terminus: Nitrate/nitrite sensor protein NarX (598 aa).

Residues 1 to 14 are Cytoplasmic-facing; sequence MLKRCLSPLTLVNQ. A helical transmembrane segment spans residues 15–37; sequence VALIVLLSTAIGLAGMAVSGWLV. At 38–151 the chain is on the periplasmic side; sequence QGVQGSAHAI…DRTTEMRIET (114 aa). The chain crosses the membrane as a helical span at residues 152-174; sequence VVLVHRVMAVFMALLLVFTIIWL. Residues 175-598 lie on the Cytoplasmic side of the membrane; it reads RARLLQPWRQ…FTDVQGDTHE (424 aa). Residues 176–228 form the HAMP domain; the sequence is ARLLQPWRQLLAMASAVSHRDFTQRANISGRNEMAMLGTALNNMSAELAESYA. Residues 393–587 form the Histidine kinase domain; the sequence is TIARELHDSI…EVVVTFIPEK (195 aa). His399 bears the Phosphohistidine; by autocatalysis mark.

It is found in the cell inner membrane. It carries out the reaction ATP + protein L-histidine = ADP + protein N-phospho-L-histidine.. Functionally, acts as a sensor for nitrate/nitrite and transduces signal of nitrate availability to the NarL protein and of both nitrate/nitrite to the NarP protein. NarX probably activates NarL and NarP by phosphorylation in the presence of nitrate. NarX also plays a negative role in controlling NarL activity, probably through dephosphorylation in the absence of nitrate. The polypeptide is Nitrate/nitrite sensor protein NarX (narX) (Escherichia coli O157:H7).